We begin with the raw amino-acid sequence, 1206 residues long: Phosphoglucan, water dikinase, chloroplastic (1206 aa).

Disordered regions lie at residues 1 to 20 (MTSL…PRRG) and 52 to 71 (RSAA…DSSK). A chloroplast-targeting transit peptide spans 1 to 56 (MTSLRPLETSLSIGGRPRRGLVLPPPGVGAGVLLRRGAMALPGRRGFACRGRSAAS). In terms of domain architecture, CBM20 spans 67–168 (RDSSKQPLVH…KFDIVCHWNR (102 aa)). The active-site Tele-phosphohistidine intermediate is the His776.

Belongs to the PEP-utilizing enzyme family. In terms of assembly, homodimer. Mg(2+) is required as a cofactor.

It is found in the plastid. Its subcellular location is the chloroplast. The catalysed reaction is [(1-&gt;4)-6-phospho-alpha-D-glucosyl](n) + n ATP + n H2O = [(1-&gt;4)-3,6-bisphospho-alpha-D-glucosyl](n) + n AMP + n phosphate + 2n H(+). Mediates the incorporation of phosphate into starch-like phospho-alpha-glucan, mostly at the C-3 position of glucose units. May be required for starch degradation, suggesting that the phosphate content of starch regulates its degradability. The chain is Phosphoglucan, water dikinase, chloroplastic (GWD3) from Oryza sativa subsp. japonica (Rice).